We begin with the raw amino-acid sequence, 890 residues long: Agglutinin-like protein ARB_02240 (890 aa).

The N-terminal stretch at 1-20 (MRLTTSVLLWAATSVLQADA) is a signal peptide. Residues N106, N217, N583, and N654 are each glycosylated (N-linked (GlcNAc...) asparagine). Residues 680–872 (IPSGPTTRPE…GGAGSLSPST (193 aa)) form a disordered region. Composition is skewed to low complexity over residues 693 to 753 (TSST…TDSS) and 760 to 790 (TTST…HSST). Positions 791–802 (GSDPESTNTRHP) are enriched in polar residues. Low complexity-rich tracts occupy residues 803–812 (SSTASGSTTT) and 821–837 (SSSS…TATT). Residues 838-848 (TGGGSIPGSGT) show a composition bias toward gly residues. G864 carries the GPI-anchor amidated glycine lipid modification. The propeptide at 865 to 890 (AGSLSPSTWGKVVTCISSMALLVAFI) is removed in mature form.

This sequence belongs to the ALS family. The GPI-anchor is attached to the protein in the endoplasmic reticulum and serves to target the protein to the cell surface. There, the glucosamine-inositol phospholipid moiety is cleaved off and the GPI-modified mannoprotein is covalently attached via its lipidless GPI glycan remnant to the 1,6-beta-glucan of the outer cell wall layer.

It is found in the secreted. Its subcellular location is the cell membrane. The protein resides in the cell wall. Functionally, cell surface adhesion protein which mediates cell agglutination and host tissue adherence. This Arthroderma benhamiae (strain ATCC MYA-4681 / CBS 112371) (Trichophyton mentagrophytes) protein is Agglutinin-like protein ARB_02240.